Reading from the N-terminus, the 540-residue chain is Ipecac alkaloid beta-glucosidase 9 (540 aa).

A beta-D-glucoside is bound by residues Q36, H140, 185–186, Y350, E421, W470, and F486; that span reads NE. E186 functions as the Proton donor in the catalytic mechanism. The Nucleophile role is filled by E421.

The protein belongs to the glycosyl hydrolase 1 family.

It is found in the cytoplasm. The protein localises to the cytosol. The enzyme catalyses deacetylipecoside + H2O = deacetylipecoside aglycone + D-glucose. The catalysed reaction is deacetylisoipecoside + H2O = deacetylisoipecoside aglycone + D-glucose. Its pathway is alkaloid biosynthesis. Beta-glucosidase catalyzing deglucosylation on N-deacetylisoipecoside and N-deacetylipecoside. The protein is Ipecac alkaloid beta-glucosidase 9 of Carapichea ipecacuanha (Ipecac).